The following is a 176-amino-acid chain: Ribosome maturation factor RimM (176 aa).

One can recognise a PRC barrel domain in the interval 96-176 (PEDEFYWRDL…QILVDWDPDF (81 aa)).

It belongs to the RimM family. In terms of assembly, binds ribosomal protein uS19.

It is found in the cytoplasm. Functionally, an accessory protein needed during the final step in the assembly of 30S ribosomal subunit, possibly for assembly of the head region. Essential for efficient processing of 16S rRNA. May be needed both before and after RbfA during the maturation of 16S rRNA. It has affinity for free ribosomal 30S subunits but not for 70S ribosomes. In Shewanella piezotolerans (strain WP3 / JCM 13877), this protein is Ribosome maturation factor RimM.